Consider the following 366-residue polypeptide: NADH-quinone oxidoreductase subunit D (366 aa).

The protein belongs to the complex I 49 kDa subunit family. NDH-1 is composed of 14 different subunits. Subunits NuoB, C, D, E, F, and G constitute the peripheral sector of the complex.

It localises to the cell membrane. The enzyme catalyses a quinone + NADH + 5 H(+)(in) = a quinol + NAD(+) + 4 H(+)(out). Functionally, NDH-1 shuttles electrons from NADH, via FMN and iron-sulfur (Fe-S) centers, to quinones in the respiratory chain. The immediate electron acceptor for the enzyme in this species is believed to be a menaquinone. Couples the redox reaction to proton translocation (for every two electrons transferred, four hydrogen ions are translocated across the cytoplasmic membrane), and thus conserves the redox energy in a proton gradient. In Bacillus mycoides (strain KBAB4) (Bacillus weihenstephanensis), this protein is NADH-quinone oxidoreductase subunit D.